We begin with the raw amino-acid sequence, 343 residues long: Aspartate-semialdehyde dehydrogenase (343 aa).

Residues 13–16 and 41–42 contribute to the NADP(+) site; these read TGAV and KS. Arg-103 lines the phosphate pocket. Cys-134 (acyl-thioester intermediate) is an active-site residue. A substrate-binding site is contributed by Gln-161. 164-165 lines the NADP(+) pocket; it reads SG. Lys-220 is a binding site for phosphate. Position 241 (Arg-241) interacts with substrate. Catalysis depends on His-248, which acts as the Proton acceptor. An NADP(+)-binding site is contributed by Gln-321.

The protein belongs to the aspartate-semialdehyde dehydrogenase family. As to quaternary structure, homodimer.

The catalysed reaction is L-aspartate 4-semialdehyde + phosphate + NADP(+) = 4-phospho-L-aspartate + NADPH + H(+). It functions in the pathway amino-acid biosynthesis; L-lysine biosynthesis via DAP pathway; (S)-tetrahydrodipicolinate from L-aspartate: step 2/4. It participates in amino-acid biosynthesis; L-methionine biosynthesis via de novo pathway; L-homoserine from L-aspartate: step 2/3. The protein operates within amino-acid biosynthesis; L-threonine biosynthesis; L-threonine from L-aspartate: step 2/5. Functionally, catalyzes the NADPH-dependent formation of L-aspartate-semialdehyde (L-ASA) by the reductive dephosphorylation of L-aspartyl-4-phosphate. This chain is Aspartate-semialdehyde dehydrogenase, found in Campylobacter jejuni subsp. jejuni serotype O:2 (strain ATCC 700819 / NCTC 11168).